The sequence spans 135 residues: MARVTVEDCIDKVENRFELVLLASHRARLVSQGAPITVDRDNDKNPVVALREIADETLSPGDLKEDLIHSLQKHVEVDEPEPDPASLVQTEATPAFAEAAEEEDQPEALTFDRMSEEELLAGIEGLVPPEKSDDY.

Belongs to the RNA polymerase subunit omega family. In terms of assembly, the RNAP catalytic core consists of 2 alpha, 1 beta, 1 beta' and 1 omega subunit. When a sigma factor is associated with the core the holoenzyme is formed, which can initiate transcription.

The catalysed reaction is RNA(n) + a ribonucleoside 5'-triphosphate = RNA(n+1) + diphosphate. Promotes RNA polymerase assembly. Latches the N- and C-terminal regions of the beta' subunit thereby facilitating its interaction with the beta and alpha subunits. This chain is DNA-directed RNA polymerase subunit omega, found in Sinorhizobium medicae (strain WSM419) (Ensifer medicae).